A 553-amino-acid polypeptide reads, in one-letter code: Dihydroxy-acid dehydratase 1 (553 aa).

Aspartate 78 serves as a coordination point for Mg(2+). Cysteine 119 contacts [2Fe-2S] cluster. Positions 120 and 121 each coordinate Mg(2+). Lysine 121 carries the N6-carboxylysine modification. Cysteine 191 contacts [2Fe-2S] cluster. Residue glutamate 444 participates in Mg(2+) binding. Residue serine 470 is the Proton acceptor of the active site.

It belongs to the IlvD/Edd family. As to quaternary structure, homodimer. [2Fe-2S] cluster is required as a cofactor. Requires Mg(2+) as cofactor.

The enzyme catalyses (2R)-2,3-dihydroxy-3-methylbutanoate = 3-methyl-2-oxobutanoate + H2O. It carries out the reaction (2R,3R)-2,3-dihydroxy-3-methylpentanoate = (S)-3-methyl-2-oxopentanoate + H2O. Its pathway is amino-acid biosynthesis; L-isoleucine biosynthesis; L-isoleucine from 2-oxobutanoate: step 3/4. The protein operates within amino-acid biosynthesis; L-valine biosynthesis; L-valine from pyruvate: step 3/4. Functions in the biosynthesis of branched-chain amino acids. Catalyzes the dehydration of (2R,3R)-2,3-dihydroxy-3-methylpentanoate (2,3-dihydroxy-3-methylvalerate) into 2-oxo-3-methylpentanoate (2-oxo-3-methylvalerate) and of (2R)-2,3-dihydroxy-3-methylbutanoate (2,3-dihydroxyisovalerate) into 2-oxo-3-methylbutanoate (2-oxoisovalerate), the penultimate precursor to L-isoleucine and L-valine, respectively. This chain is Dihydroxy-acid dehydratase 1, found in Methanosarcina acetivorans (strain ATCC 35395 / DSM 2834 / JCM 12185 / C2A).